The chain runs to 400 residues: Enoyl-[acyl-carrier-protein] reductase [NADH] (400 aa).

Residues 48-53 (GASTGY), 74-75 (FE), 111-112 (DA), and 139-140 (LA) contribute to the NAD(+) site. Position 225 (Y225) interacts with substrate. Y235 acts as the Proton donor in catalysis. Residues K244 and 273–275 (VVT) each bind NAD(+).

The protein belongs to the TER reductase family. Monomer.

The enzyme catalyses a 2,3-saturated acyl-[ACP] + NAD(+) = a (2E)-enoyl-[ACP] + NADH + H(+). It participates in lipid metabolism; fatty acid biosynthesis. In terms of biological role, involved in the final reduction of the elongation cycle of fatty acid synthesis (FAS II). Catalyzes the reduction of a carbon-carbon double bond in an enoyl moiety that is covalently linked to an acyl carrier protein (ACP). This Burkholderia ambifaria (strain MC40-6) protein is Enoyl-[acyl-carrier-protein] reductase [NADH].